A 320-amino-acid polypeptide reads, in one-letter code: Cytochrome c biogenesis protein CcsA (320 aa).

8 helical membrane-spanning segments follow: residues 9–29 (ILAHISFSLILVVTLIYWGTL), 36–56 (LSSSGGKGMIVTFLCTTGLLI), 70–90 (LYESFMFLSWSSSVFHILLEV), 97–117 (WLGAITAPSAMLTHGFATLGL), 143–163 (ILFSYATLLCGSLASIALLVI), 227–247 (AIGLGFSLSTIGTLSGAIWAN), 254–274 (WSWDPKETWALITWTIFAIYL), and 288–308 (AIVASLGFFIVWIRYLGVNLL).

It belongs to the CcmF/CycK/Ccl1/NrfE/CcsA family. In terms of assembly, may interact with Ccs1.

Its subcellular location is the plastid. It is found in the chloroplast thylakoid membrane. Functionally, required during biogenesis of c-type cytochromes (cytochrome c6 and cytochrome f) at the step of heme attachment. This Pinus thunbergii (Japanese black pine) protein is Cytochrome c biogenesis protein CcsA.